The primary structure comprises 302 residues: Phosphoribosylaminoimidazole-succinocarboxamide synthase (302 aa).

This sequence belongs to the SAICAR synthetase family.

It carries out the reaction 5-amino-1-(5-phospho-D-ribosyl)imidazole-4-carboxylate + L-aspartate + ATP = (2S)-2-[5-amino-1-(5-phospho-beta-D-ribosyl)imidazole-4-carboxamido]succinate + ADP + phosphate + 2 H(+). The protein operates within purine metabolism; IMP biosynthesis via de novo pathway; 5-amino-1-(5-phospho-D-ribosyl)imidazole-4-carboxamide from 5-amino-1-(5-phospho-D-ribosyl)imidazole-4-carboxylate: step 1/2. The chain is Phosphoribosylaminoimidazole-succinocarboxamide synthase from Ralstonia nicotianae (strain ATCC BAA-1114 / GMI1000) (Ralstonia solanacearum).